Reading from the N-terminus, the 348-residue chain is MSKQTLILLYGGRSAEREVSVLSAESVMRAVDYTKFFVKTYFISQTGQFIKTQEFSSRPTLTERLMTNDTIRLEQQIRPSDIYEEGAVVFPVLHGPMGEDGSIQGFLEVLRMPYVGTNILSSSVAMDKITTKRVLESAGIPQVAYTVYIEGQDLDRCLAETEAALSYPVFVKPANMGSSVGISKAESEEELRAAILLALTYDSRILIEQGVLAREIEVGLLGNTDVKSTLPGEVVKNVDFYDYQAKYIDNEITMAIPATIDESAMTSMRIYAETAFKAIGACGLSRCDFFLGQDGQIYLNELNTMPGFTQWSMYPLLWEHMGLNYAELIEELVRLAQEMFEKREGHLI.

In terms of domain architecture, ATP-grasp spans 132 to 334; sequence KRVLESAGIP…YAELIEELVR (203 aa). ATP is bound at residue 162 to 217; that stretch reads EAALSYPVFVKPANMGSSVGISKAESEEELRAAILLALTYDSRILIEQGVLAREIE. Residues Asp288, Glu301, and Asn303 each coordinate Mg(2+).

It belongs to the D-alanine--D-alanine ligase family. Mg(2+) serves as cofactor. It depends on Mn(2+) as a cofactor.

The protein localises to the cytoplasm. It catalyses the reaction 2 D-alanine + ATP = D-alanyl-D-alanine + ADP + phosphate + H(+). It functions in the pathway cell wall biogenesis; peptidoglycan biosynthesis. In terms of biological role, cell wall formation. This chain is D-alanine--D-alanine ligase, found in Streptococcus equi subsp. zooepidemicus (strain H70).